The chain runs to 566 residues: Arginine--tRNA ligase (566 aa).

Residues 121 to 131 (ANPNGPFHIGH) carry the 'HIGH' region motif.

This sequence belongs to the class-I aminoacyl-tRNA synthetase family.

Its subcellular location is the cytoplasm. It carries out the reaction tRNA(Arg) + L-arginine + ATP = L-arginyl-tRNA(Arg) + AMP + diphosphate. This chain is Arginine--tRNA ligase, found in Methanococcus maripaludis (strain C7 / ATCC BAA-1331).